Reading from the N-terminus, the 229-residue chain is Cytidylate kinase (229 aa).

Position 12–20 (12–20 (GPSGAGKGT)) interacts with ATP.

The protein belongs to the cytidylate kinase family. Type 1 subfamily.

It is found in the cytoplasm. The catalysed reaction is CMP + ATP = CDP + ADP. It carries out the reaction dCMP + ATP = dCDP + ADP. In Shewanella frigidimarina (strain NCIMB 400), this protein is Cytidylate kinase.